Reading from the N-terminus, the 177-residue chain is ATP-dependent protease subunit HslV (177 aa).

Thr2 is a catalytic residue. Na(+) contacts are provided by Gly157, Cys160, and Thr163.

It belongs to the peptidase T1B family. HslV subfamily. In terms of assembly, a double ring-shaped homohexamer of HslV is capped on each side by a ring-shaped HslU homohexamer. The assembly of the HslU/HslV complex is dependent on binding of ATP.

The protein localises to the cytoplasm. The enzyme catalyses ATP-dependent cleavage of peptide bonds with broad specificity.. Its activity is regulated as follows. Allosterically activated by HslU binding. In terms of biological role, protease subunit of a proteasome-like degradation complex believed to be a general protein degrading machinery. This chain is ATP-dependent protease subunit HslV, found in Aeromonas salmonicida (strain A449).